The following is a 398-amino-acid chain: Fatty-acid-binding protein 2 (398 aa).

Residues Arg-222, Tyr-235, and Ser-302 each contribute to the dodecanoate site.

It belongs to the chalcone isomerase family. In terms of tissue distribution, expressed in developing cotyledons, young seedlings, roots, seeds, embryos, macrospores, preanthesis and tapetum. Restricted to developing and reproductive tissues.

Its subcellular location is the plastid. It is found in the chloroplast stroma. Fatty-acid-binding protein. Associates with saturated fatty acid. The chain is Fatty-acid-binding protein 2 (FAP2) from Arabidopsis thaliana (Mouse-ear cress).